The chain runs to 185 residues: Elongation factor P (185 aa).

This sequence belongs to the elongation factor P family.

Its subcellular location is the cytoplasm. It participates in protein biosynthesis; polypeptide chain elongation. Involved in peptide bond synthesis. Stimulates efficient translation and peptide-bond synthesis on native or reconstituted 70S ribosomes in vitro. Probably functions indirectly by altering the affinity of the ribosome for aminoacyl-tRNA, thus increasing their reactivity as acceptors for peptidyl transferase. The polypeptide is Elongation factor P (Aromatoleum aromaticum (strain DSM 19018 / LMG 30748 / EbN1) (Azoarcus sp. (strain EbN1))).